We begin with the raw amino-acid sequence, 364 residues long: Histidinol-phosphate aminotransferase (364 aa).

At Lys226 the chain carries N6-(pyridoxal phosphate)lysine.

This sequence belongs to the class-II pyridoxal-phosphate-dependent aminotransferase family. Histidinol-phosphate aminotransferase subfamily. In terms of assembly, homodimer. It depends on pyridoxal 5'-phosphate as a cofactor.

It carries out the reaction L-histidinol phosphate + 2-oxoglutarate = 3-(imidazol-4-yl)-2-oxopropyl phosphate + L-glutamate. It functions in the pathway amino-acid biosynthesis; L-histidine biosynthesis; L-histidine from 5-phospho-alpha-D-ribose 1-diphosphate: step 7/9. This Campylobacter jejuni subsp. jejuni serotype O:6 (strain 81116 / NCTC 11828) protein is Histidinol-phosphate aminotransferase.